The sequence spans 456 residues: Sulfate adenylyltransferase (456 aa).

This sequence belongs to the sulfate adenylyltransferase family.

It catalyses the reaction sulfate + ATP + H(+) = adenosine 5'-phosphosulfate + diphosphate. Its pathway is sulfur metabolism; hydrogen sulfide biosynthesis; sulfite from sulfate: step 1/3. In Archaeoglobus fulgidus (strain ATCC 49558 / DSM 4304 / JCM 9628 / NBRC 100126 / VC-16), this protein is Sulfate adenylyltransferase (sat).